A 208-amino-acid polypeptide reads, in one-letter code: Large ribosomal subunit protein uL3 (208 aa).

The segment at 116-148 (GFQGVIKRHGQSRGPMAHGSRYHRRPGSMGPVA) is disordered.

It belongs to the universal ribosomal protein uL3 family. Part of the 50S ribosomal subunit. Forms a cluster with proteins L14 and L19.

In terms of biological role, one of the primary rRNA binding proteins, it binds directly near the 3'-end of the 23S rRNA, where it nucleates assembly of the 50S subunit. The sequence is that of Large ribosomal subunit protein uL3 from Streptococcus pneumoniae (strain Hungary19A-6).